Here is a 612-residue protein sequence, read N- to C-terminus: Chaperone protein DnaK (612 aa).

Threonine 173 is subject to Phosphothreonine; by autocatalysis. The span at 524–544 shows a compositional bias: basic and acidic residues; the sequence is DDKVSEEDKQKAESAKDELKQ. 2 disordered regions span residues 524 to 560 and 572 to 612; these read DDKVSEEDKQKAESAKDELKQALESGDMEQVKAKKDA and LYEQ…DDKK. Over residues 574 to 586 the composition is skewed to low complexity; that stretch reads EQVQQEAQQASGE. The segment covering 587 to 612 has biased composition (acidic residues); it reads QGEESGNQDDDVVDADYSEVDDDDKK.

Belongs to the heat shock protein 70 family.

Acts as a chaperone. The sequence is that of Chaperone protein DnaK from Oceanobacillus iheyensis (strain DSM 14371 / CIP 107618 / JCM 11309 / KCTC 3954 / HTE831).